Reading from the N-terminus, the 338-residue chain is MKRMIALDGAQGEGGGQILRSALSLSMITGQPFTITSIRAGRAKPGLLRQHLTAVKAATEICGATVEGAELGSQRLLFRPGTVRGGDYRFAIGSAGSCTLVLQTVLPALWFADGPSRVEVSGGTDNPSAPPADFIRRVLEPLLAKIGIHQQTTLLRHGFYPAGGGVVATEVSPVASFNTLQLGERGNIVQMRGEVLLAGVPRHVAEREIATLAGSFSLHEQNIHNLPRDQGPGNTVSLEVESENITERFFVVGEKRVSAEVVAAQLVKEVKRYLASTAAVGEYLADQLVLPMALAGAGEFTVAHPSCHLLTNIAVVERFLPVRFSLIETDGVTRVSIE.

Residues glutamine 103 and 283-287 (YLADQ) contribute to the ATP site. The Tele-AMP-histidine intermediate role is filled by histidine 308.

The protein belongs to the RNA 3'-terminal cyclase family. Type 1 subfamily.

It is found in the cytoplasm. It catalyses the reaction a 3'-end 3'-phospho-ribonucleotide-RNA + ATP = a 3'-end 2',3'-cyclophospho-ribonucleotide-RNA + AMP + diphosphate. Catalyzes the conversion of 3'-phosphate to a 2',3'-cyclic phosphodiester at the end of RNA. The mechanism of action of the enzyme occurs in 3 steps: (A) adenylation of the enzyme by ATP; (B) transfer of adenylate to an RNA-N3'P to produce RNA-N3'PP5'A; (C) and attack of the adjacent 2'-hydroxyl on the 3'-phosphorus in the diester linkage to produce the cyclic end product. The biological role of this enzyme is unknown but it is likely to function in some aspects of cellular RNA processing. The protein is RNA 3'-terminal phosphate cyclase of Escherichia coli (strain K12 / MC4100 / BW2952).